The chain runs to 884 residues: E3 SUMO-protein ligase SIZ1 (884 aa).

Positions 11-45 (LSYFRIKELKDVLTQLGLSKQGKKQELVDRILTLL) constitute an SAP domain. Positions 84–103 (LASKGQVSSDTSNLKVKGEP) are disordered. The span at 88–97 (GQVSSDTSNL) shows a compositional bias: polar residues. A Glycyl lysine isopeptide (Lys-Gly) (interchain with G-Cter in SUMO) cross-link involves residue Lys-100. The segment at 112 to 168 (KVRCVCGNSLETDSMIQCEDPRCHVWQHVGCVILPDKPMDGNPPLPESFYCEICRLT) adopts a PHD-type zinc-finger fold. The segment at 346–429 (SDSDIEVVAD…FNRITSKMKH (84 aa)) adopts an SP-RING-type zinc-finger fold. Zn(2+)-binding residues include Cys-379, His-381, Cys-402, and Cys-405. Lys-488 participates in a covalent cross-link: Glycyl lysine isopeptide (Lys-Gly) (interchain with G-Cter in SUMO). 3 disordered regions span residues 753-778 (PSLQ…ADMS), 792-824 (GDSA…MDTT), and 836-869 (DSRQ…QTRH). Polar residues-rich tracts occupy residues 766 to 778 (SAQS…ADMS) and 803 to 824 (ATTN…MDTT). The segment covering 837–847 (SRQDKAKKQRS) has biased composition (basic and acidic residues).

Belongs to the PIAS family. In terms of assembly, interacts (via PHD domain) with SCE1, GTE3 and GTE5. Autosumoylated at Lys-100 and Lys-488. Ubiquitous.

The protein resides in the nucleus speckle. It functions in the pathway protein modification; protein sumoylation. E3 SUMO protein ligase involved in regulation processes. Mediates SUMO/ attachment to PHR1, a MYB transcriptional activator controlling the phosphate deficiency responses. Functions as an upstream negative regulator of salicylic acid (SA) accumulation and subsequent SA-mediated systemic acquired resistance (SAR) signaling. Probably not involved in jasmonic acid (JA)-mediated defense response. Participates in abiotic stress-induced sumoylation. Controls heat shock-induced SUMO1 and SUMO2 conjugation and facilitates basal thermotolerance. Involved in freezing tolerance by mediating sumoylation of ICE1, a transcription activator of the cold signaling regulator CBF3/DREB1A. Acts as a positive regulator of drought stress tolerance. Acts as a floral repressor that promotes FLC expression by repressing FLD activity through sumoylation. Acts as a negative regulator of abscisic acid (ABA) signaling through ABI5 sumoylation. Mediates sumoylation of SCE1, GTE3 and GTE5. Functions as a negative regulator of SnRK1 signaling through sumoylation of several components of the SnRK1 complex. The sequence is that of E3 SUMO-protein ligase SIZ1 from Arabidopsis thaliana (Mouse-ear cress).